A 233-amino-acid chain; its full sequence is Phosphoribosylformylglycinamidine synthase subunit PurQ (233 aa).

The Glutamine amidotransferase type-1 domain maps to 3–233; the sequence is SAVLVFPGIN…GLVAHLERAA (231 aa). The active-site Nucleophile is C87. Residues H204 and E206 contribute to the active site.

Part of the FGAM synthase complex composed of 1 PurL, 1 PurQ and 2 PurS subunits.

The protein localises to the cytoplasm. It carries out the reaction N(2)-formyl-N(1)-(5-phospho-beta-D-ribosyl)glycinamide + L-glutamine + ATP + H2O = 2-formamido-N(1)-(5-O-phospho-beta-D-ribosyl)acetamidine + L-glutamate + ADP + phosphate + H(+). It catalyses the reaction L-glutamine + H2O = L-glutamate + NH4(+). Its pathway is purine metabolism; IMP biosynthesis via de novo pathway; 5-amino-1-(5-phospho-D-ribosyl)imidazole from N(2)-formyl-N(1)-(5-phospho-D-ribosyl)glycinamide: step 1/2. In terms of biological role, part of the phosphoribosylformylglycinamidine synthase complex involved in the purines biosynthetic pathway. Catalyzes the ATP-dependent conversion of formylglycinamide ribonucleotide (FGAR) and glutamine to yield formylglycinamidine ribonucleotide (FGAM) and glutamate. The FGAM synthase complex is composed of three subunits. PurQ produces an ammonia molecule by converting glutamine to glutamate. PurL transfers the ammonia molecule to FGAR to form FGAM in an ATP-dependent manner. PurS interacts with PurQ and PurL and is thought to assist in the transfer of the ammonia molecule from PurQ to PurL. The polypeptide is Phosphoribosylformylglycinamidine synthase subunit PurQ (Nitrobacter winogradskyi (strain ATCC 25391 / DSM 10237 / CIP 104748 / NCIMB 11846 / Nb-255)).